A 239-amino-acid polypeptide reads, in one-letter code: 7-cyano-7-deazaguanine synthase (239 aa).

8-18 (LSGGLDSPTVL) contacts ATP. C188, C196, C199, and C202 together coordinate Zn(2+).

This sequence belongs to the QueC family. Requires Zn(2+) as cofactor.

It carries out the reaction 7-carboxy-7-deazaguanine + NH4(+) + ATP = 7-cyano-7-deazaguanine + ADP + phosphate + H2O + H(+). It participates in purine metabolism; 7-cyano-7-deazaguanine biosynthesis. In terms of biological role, catalyzes the ATP-dependent conversion of 7-carboxy-7-deazaguanine (CDG) to 7-cyano-7-deazaguanine (preQ(0)). In Picrophilus torridus (strain ATCC 700027 / DSM 9790 / JCM 10055 / NBRC 100828 / KAW 2/3), this protein is 7-cyano-7-deazaguanine synthase.